The primary structure comprises 117 residues: Large ribosomal subunit protein bL19 (117 aa).

It belongs to the bacterial ribosomal protein bL19 family.

Its function is as follows. This protein is located at the 30S-50S ribosomal subunit interface and may play a role in the structure and function of the aminoacyl-tRNA binding site. The chain is Large ribosomal subunit protein bL19 from Thioalkalivibrio sulfidiphilus (strain HL-EbGR7).